A 1188-amino-acid chain; its full sequence is DNA-directed RNA polymerase subunit beta (1188 aa).

This sequence belongs to the RNA polymerase beta chain family. As to quaternary structure, the RNAP catalytic core consists of 2 alpha, 1 beta, 1 beta' and 1 omega subunit. When a sigma factor is associated with the core the holoenzyme is formed, which can initiate transcription.

It catalyses the reaction RNA(n) + a ribonucleoside 5'-triphosphate = RNA(n+1) + diphosphate. Its function is as follows. DNA-dependent RNA polymerase catalyzes the transcription of DNA into RNA using the four ribonucleoside triphosphates as substrates. The polypeptide is DNA-directed RNA polymerase subunit beta (Streptococcus pyogenes serotype M3 (strain ATCC BAA-595 / MGAS315)).